Here is a 163-residue protein sequence, read N- to C-terminus: Putative H/ACA ribonucleoprotein complex subunit 2-like protein (163 aa).

It belongs to the eukaryotic ribosomal protein eL8 family. Component of the small nucleolar ribonucleoprotein particle containing H/ACA-type snoRNAs (H/ACA snoRNPs).

The protein resides in the nucleus. It localises to the nucleolus. In terms of biological role, required for ribosome biogenesis. Part of a complex which catalyzes pseudouridylation of rRNA. This involves the isomerization of uridine such that the ribose is subsequently attached to C5, instead of the normal N1. Pseudouridine ('psi') residues may serve to stabilize the conformation of rRNAs. This chain is Putative H/ACA ribonucleoprotein complex subunit 2-like protein, found in Caenorhabditis briggsae.